The chain runs to 343 residues: N-acetyl-gamma-glutamyl-phosphate reductase (343 aa).

Cys147 is an active-site residue.

It belongs to the NAGSA dehydrogenase family. Type 1 subfamily.

Its subcellular location is the cytoplasm. The enzyme catalyses N-acetyl-L-glutamate 5-semialdehyde + phosphate + NADP(+) = N-acetyl-L-glutamyl 5-phosphate + NADPH + H(+). Its pathway is amino-acid biosynthesis; L-arginine biosynthesis; N(2)-acetyl-L-ornithine from L-glutamate: step 3/4. In terms of biological role, catalyzes the NADPH-dependent reduction of N-acetyl-5-glutamyl phosphate to yield N-acetyl-L-glutamate 5-semialdehyde. This Staphylococcus saprophyticus subsp. saprophyticus (strain ATCC 15305 / DSM 20229 / NCIMB 8711 / NCTC 7292 / S-41) protein is N-acetyl-gamma-glutamyl-phosphate reductase.